We begin with the raw amino-acid sequence, 330 residues long: Phenylalanine--tRNA ligase alpha subunit (330 aa).

Glutamate 257 lines the Mg(2+) pocket.

It belongs to the class-II aminoacyl-tRNA synthetase family. Phe-tRNA synthetase alpha subunit type 1 subfamily. Tetramer of two alpha and two beta subunits. Requires Mg(2+) as cofactor.

It localises to the cytoplasm. The catalysed reaction is tRNA(Phe) + L-phenylalanine + ATP = L-phenylalanyl-tRNA(Phe) + AMP + diphosphate + H(+). In Nostoc punctiforme (strain ATCC 29133 / PCC 73102), this protein is Phenylalanine--tRNA ligase alpha subunit.